A 624-amino-acid chain; its full sequence is Serine/threonine-protein kinase ppk35 (624 aa).

The 304-residue stretch at 162 to 465 folds into the Protein kinase domain; that stretch reads FDLLVKLGQG…TIEIQKHPFF (304 aa). Residues 168–176 and Lys191 each bind ATP; that span reads LGQGGYGSV. Residue Asp285 is the Proton acceptor of the active site. The AGC-kinase C-terminal domain occupies 466–548; the sequence is KRLHWNGLRK…KYRPNARKPL (83 aa). Over residues 545–559 the composition is skewed to basic residues; the sequence is RKPLVGRHREKRQLR. A disordered region spans residues 545–617; it reads RKPLVGRHRE…VHRLLERKGK (73 aa). Over residues 560 to 574 the composition is skewed to basic and acidic residues; sequence KEKPEKKNNSTKQKD. Residues 596-609 are compositionally biased toward basic residues; that stretch reads SKTKGHKTKSSRVH.

It belongs to the protein kinase superfamily. Ser/Thr protein kinase family.

The protein localises to the cytoplasm. The protein resides in the nucleus. It localises to the nucleolus. It catalyses the reaction L-seryl-[protein] + ATP = O-phospho-L-seryl-[protein] + ADP + H(+). The catalysed reaction is L-threonyl-[protein] + ATP = O-phospho-L-threonyl-[protein] + ADP + H(+). Has a role in meiosis. The chain is Serine/threonine-protein kinase ppk35 (ppk35) from Schizosaccharomyces pombe (strain 972 / ATCC 24843) (Fission yeast).